Reading from the N-terminus, the 41-residue chain is Conotoxin Ac4.2 (41 aa).

Residues Phe-1–Arg-11 constitute a propeptide that is removed on maturation. A 4-hydroxyproline modification is found at Pro-13. Residues Thr-18 and Thr-20 are each glycosylated (O-linked (HexNAc...) threonine). 4-hydroxyproline is present on residues Pro-29 and Pro-33. Cys-40 bears the Cysteine amide mark.

This sequence belongs to the conotoxin A superfamily. Contains 3 disulfide bonds. As to expression, expressed by the venom duct.

The protein localises to the secreted. In terms of biological role, probable neurotoxin with ion channel inhibitor activity. The sequence is that of Conotoxin Ac4.2 from Conus achatinus (Little frog cone).